Here is a 124-residue protein sequence, read N- to C-terminus: Large ribosomal subunit protein bL12 (124 aa).

This sequence belongs to the bacterial ribosomal protein bL12 family. As to quaternary structure, homodimer. Part of the ribosomal stalk of the 50S ribosomal subunit. Forms a multimeric L10(L12)X complex, where L10 forms an elongated spine to which 2 to 4 L12 dimers bind in a sequential fashion. Binds GTP-bound translation factors.

Functionally, forms part of the ribosomal stalk which helps the ribosome interact with GTP-bound translation factors. Is thus essential for accurate translation. In Nitrosomonas europaea (strain ATCC 19718 / CIP 103999 / KCTC 2705 / NBRC 14298), this protein is Large ribosomal subunit protein bL12.